The chain runs to 119 residues: MKEKSVKLQRTESLLKEVIPEALSTLSDTRLNSLGVVEVDCSKGKYHAEVYLDAPFATPEEKREILRQLRLAEGTIRDHCLSATGWFKCPRFHFNFDDSTDKANRLDAIFEQLKKERES.

Belongs to the RbfA family. Monomer. Binds 30S ribosomal subunits, but not 50S ribosomal subunits or 70S ribosomes.

It localises to the cytoplasm. One of several proteins that assist in the late maturation steps of the functional core of the 30S ribosomal subunit. Associates with free 30S ribosomal subunits (but not with 30S subunits that are part of 70S ribosomes or polysomes). Required for efficient processing of 16S rRNA. May interact with the 5'-terminal helix region of 16S rRNA. The protein is Ribosome-binding factor A of Wolinella succinogenes (strain ATCC 29543 / DSM 1740 / CCUG 13145 / JCM 31913 / LMG 7466 / NCTC 11488 / FDC 602W) (Vibrio succinogenes).